The primary structure comprises 30 residues: Scolopendra 20528.11 Da toxin (30 aa).

Belongs to the CRISP family. Venom allergen 5-like subfamily. Post-translationally, contains 3 disulfide bonds. As to expression, expressed by the venom gland.

The protein resides in the secreted. The sequence is that of Scolopendra 20528.11 Da toxin from Scolopendra angulata (Barbados giant red centipede).